Reading from the N-terminus, the 536-residue chain is MAEHAPRRCCLGWDFSTQQVKVVAVDAELNVFYEESVHFDRDLPEFGTQGGVHVHKDGLTVTSPVLMWVQALDIILEKMKASGFDFSQVLALSGAGQQHGSIYWKAGAQQALTSLSPDLRLHQQLQDCFSISDCPVWMDSSTTAQCRQLEAAVGGAQALSCLTGSRAYERFTGNQIAKIYQQNPEAYSHTERISLVSSFAASLFLGSYSPIDYSDGSGMNLLQIQDKVWSQACLGACAPHLEEKLSPPVPSCSVVGAISSYYVQRYGFPPGCKVVAFTGDNPASLAGMRLEEGDIAVSLGTSDTLFLWLQEPMPALEGHIFCNPVDSQHYMALLCFKNGSLMREKIRNESVSRSWSDFSKALQSTEMGNGGNLGFYFDVMEITPEIIGRHRFNTENHKVAAFPGDVEVRALIEGQFMAKRIHAEGLGYRVMSKTKILATGGASHNREILQVLADVFDAPVYVIDTANSACVGSAYRAFHGLAGGTDVPFSEVVKLAPNPRLAATPSPGASQVYEALLPQYAKLEQRILSQTRGPPE.

Residues histidine 99, arginine 170, aspartate 280, and asparagine 281 each coordinate substrate. ATP-binding positions include tryptophan 355, glycine 441–alanine 442, and asparagine 445.

The protein belongs to the FGGY kinase family. Monomer.

It catalyses the reaction D-xylulose + ATP = D-xylulose 5-phosphate + ADP + H(+). Phosphorylates D-xylulose to produce D-xylulose 5-phosphate, a molecule that may play an important role in the regulation of glucose metabolism and lipogenesis. The protein is Xylulose kinase (XYLB) of Homo sapiens (Human).